The primary structure comprises 214 residues: Galactokinase (214 aa).

Alpha-D-galactose contacts are provided by Arg-47, Asp-53, His-54, and Asp-56. ATP is bound by residues Gly-149, Gly-151, Ser-153, and Ser-154. Alpha-D-galactose is bound at residue Asp-199. Asp-199 acts as the Proton acceptor in catalysis.

It belongs to the GHMP kinase family. GalK subfamily.

It catalyses the reaction alpha-D-galactose + ATP = alpha-D-galactose 1-phosphate + ADP + H(+). It functions in the pathway carbohydrate metabolism; galactose metabolism. Functionally, galactokinase is a key enzyme in the galactose metabolism where it catalyzes the conversion of alpha-D-galactose to galactose 1-phosphate. Can also induce the transcription of the gal genes in response to the organism being challenged with galactose as the sole source of carbon. The sequence is that of Galactokinase from Candida maltosa (Yeast).